Here is a 303-residue protein sequence, read N- to C-terminus: Y-box-binding protein 1 (303 aa).

A compositionally biased stretch (polar residues) spans 1-12 (MSSEVETQQQQP). The disordered stretch occupies residues 1 to 28 (MSSEVETQQQQPDALEGKAGQEPAATVG). The region spanning 39–103 (GTVKWFNVRN…GEKGAEAANV (65 aa)) is the CSD domain. The C5-methylcytosine binding stretch occupies residues 43 to 48 (WFNVRN). The tract at residues 98–303 (AEAANVTGPE…TPEAEQGGAE (206 aa)) is disordered. The segment covering 122–132 (HYRRYPRRRGP) has biased composition (basic residues). Composition is skewed to low complexity over residues 133 to 143 (PRNYQQNYQNN) and 173 to 187 (PPYY…RPQY). Basic residues-rich tracts occupy residues 220–229 (FRPRFRRGPP) and 258–270 (RRYR…RRRR). Basic and acidic residues predominate over residues 271-284 (PENPKSQDGKETKA).

It belongs to the YBX1 family.

It is found in the cytoplasm. It localises to the nucleus. The protein resides in the cytoplasmic granule. The protein localises to the secreted. Its subcellular location is the extracellular exosome. It is found in the P-body. DNA- and RNA-binding protein involved in various processes, such as translational repression, RNA stabilization, mRNA splicing and transcription regulation. Binds preferentially to the 5'-[CU]CUGCG-3' RNA motif and specifically recognizes mRNA transcripts modified by C5-methylcytosine (m5C). Promotes mRNA stabilization: acts by binding to m5C-containing mRNAs and preventing mRNA decay. Plays a role in the maternal-to-zygotic transition in early embryo by binding to m5C-containing maternal mRNAs and preventing their degradation. Also promotes maternal-to-zygotic transition in oocytes and embryos by promoting translation repression; molecular mechanisms governing translation repression are unknown. Plays a key role in RNA composition of extracellular exosomes by defining the sorting of small non-coding RNAs, such as tRNAs, Y RNAs, Vault RNAs and miRNAs. Probably sorts RNAs in exosomes by recognizing and binding C5-methylcytosine (m5C)-containing RNAs. Acts as a key effector of epidermal progenitors by preventing epidermal progenitor senescence: acts by regulating the translation of a senescence-associated subset of cytokine mRNAs, possibly by binding to m5C-containing mRNAs. Also involved in pre-mRNA alternative splicing regulation: binds to splice sites in pre-mRNA and regulates splice site selection. Also able to bind DNA and regulate transcription. Binds to promoters that contain a Y-box (5'-CTGATTGGCCAA-3'). Promotes separation of DNA strands that contain mismatches or are modified by cisplatin. Has endonucleolytic activity and can introduce nicks or breaks into double-stranded DNA, suggesting a role in DNA repair. The secreted form acts as an extracellular mitogen and stimulates cell migration and proliferation. The sequence is that of Y-box-binding protein 1 from Xenopus laevis (African clawed frog).